A 36-amino-acid polypeptide reads, in one-letter code: Mu/kappa-theraphotoxin-Ap1a (36 aa).

Disulfide bonds link cysteine 3–cysteine 18, cysteine 10–cysteine 23, and cysteine 17–cysteine 30. Residue phenylalanine 36 is modified to Phenylalanine amide.

The protein belongs to the neurotoxin 10 (Hwtx-1) family. In terms of tissue distribution, expressed by the venom gland.

The protein resides in the secreted. Functionally, inhibitor of voltage-gated potassium and sodium channels. Among other potassium channels, it selectively inhibits Kv10.1/KCNH1/EAG1 (IC(50)=236 nM) by shifting the voltage dependence of channel activation in a depolarising direction, it shows a maximum inhibition of 80% at saturating concentrations, it shows fast on-rates, and is poorly reversible. It also slightly affects channel inactivation, when the membrane is highly depolarised (&gt;+80 mV). It shows similar potency on Nav1.7/SCN9A (IC(50)=222 nM) and lower potency on Nav1.2/SCN2A (IC(50)=519 nM). This is Mu/kappa-theraphotoxin-Ap1a from Avicularia purpurea (Ecuadorian purple pinktoe tarantula).